The following is a 251-amino-acid chain: DNA repair protein RecO (251 aa).

It belongs to the RecO family.

Involved in DNA repair and RecF pathway recombination. The chain is DNA repair protein RecO from Streptococcus mutans serotype c (strain ATCC 700610 / UA159).